The following is a 432-amino-acid chain: Phosphomethylpyrimidine synthase (432 aa).

Substrate-binding positions include asparagine 66, methionine 95, tyrosine 124, histidine 163, 185–187 (SRG), 226–229 (DGLR), and glutamate 265. A Zn(2+)-binding site is contributed by histidine 269. Substrate is bound at residue tyrosine 292. A Zn(2+)-binding site is contributed by histidine 333. Residues cysteine 409, cysteine 412, and cysteine 416 each contribute to the [4Fe-4S] cluster site.

It belongs to the ThiC family. [4Fe-4S] cluster is required as a cofactor.

It carries out the reaction 5-amino-1-(5-phospho-beta-D-ribosyl)imidazole + S-adenosyl-L-methionine = 4-amino-2-methyl-5-(phosphooxymethyl)pyrimidine + CO + 5'-deoxyadenosine + formate + L-methionine + 3 H(+). It participates in cofactor biosynthesis; thiamine diphosphate biosynthesis. Functionally, catalyzes the synthesis of the hydroxymethylpyrimidine phosphate (HMP-P) moiety of thiamine from aminoimidazole ribotide (AIR) in a radical S-adenosyl-L-methionine (SAM)-dependent reaction. The polypeptide is Phosphomethylpyrimidine synthase (Thermoanaerobacter sp. (strain X514)).